The following is a 112-amino-acid chain: MTRVKRGYVARRRRKNILKLTSGFQGAHSTLFRTANQQGMKSLTSSHRDRGKRKRDFRRLWITRINAAARRSKKSYHTLIQELYKRKILLNRKMLAQIAILDTYCFSTLLGD.

The protein belongs to the bacterial ribosomal protein bL20 family.

It localises to the plastid. Its subcellular location is the chloroplast. Binds directly to 23S ribosomal RNA and is necessary for the in vitro assembly process of the 50S ribosomal subunit. It is not involved in the protein synthesizing functions of that subunit. This chain is Large ribosomal subunit protein bL20c (rpl20), found in Anthoceros angustus (Hornwort).